The primary structure comprises 443 residues: GTPase Der (443 aa).

2 EngA-type G domains span residues 3–167 (PVIA…PEEK) and 176–349 (IKIA…QSIQ). GTP contacts are provided by residues 9-16 (GRPNVGKS), 56-60 (DTGGL), 119-122 (NKAD), 182-189 (GRPNVGKS), 229-233 (DTAGI), and 294-297 (NKWD). Residues 350–434 (QELTTGQLTR…PVHIKLKTDP (85 aa)) form the KH-like domain.

It belongs to the TRAFAC class TrmE-Era-EngA-EngB-Septin-like GTPase superfamily. EngA (Der) GTPase family. As to quaternary structure, associates with the 50S ribosomal subunit.

GTPase that plays an essential role in the late steps of ribosome biogenesis. This is GTPase Der from Coxiella burnetii (strain CbuG_Q212) (Coxiella burnetii (strain Q212)).